Here is a 1306-residue protein sequence, read N- to C-terminus: Activating transcription factor 7-interacting protein 1 (1306 aa).

An N-acetylmethionine modification is found at Met1. Residues 1 to 23 (MDSVEEPQKKVFKARKTMRASDR) are disordered. Lys33 participates in a covalent cross-link: Glycyl lysine isopeptide (Lys-Gly) (interchain with G-Cter in SUMO2). Ser57 and Ser112 each carry phosphoserine. Disordered stretches follow at residues 104 to 470 (EDLN…SMET), 496 to 604 (LPVE…SKRR), 689 to 722 (AAKD…NNMT), 765 to 785 (VVSS…PAAP), 871 to 895 (PLPN…NSST), 920 to 1060 (RTSL…GPSQ), and 1152 to 1196 (AGPQ…STSL). Composition is skewed to polar residues over residues 109-134 (EALS…SPAS) and 143-162 (VSDN…SDNP). Thr124 is modified (phosphothreonine). Composition is skewed to low complexity over residues 185 to 212 (EEPP…CSEP), 246 to 261 (EAAS…ASDE), and 284 to 303 (PSGD…LPRS). The segment covering 432 to 441 (QSEKDEHKSP) has biased composition (basic and acidic residues). 4 positions are modified to phosphoserine: Ser511, Ser514, Ser516, and Ser533. Residues 513 to 523 (GSPSKQESSEN) are compositionally biased toward polar residues. Composition is skewed to basic and acidic residues over residues 557 to 566 (EGEKSEKDGK), 592 to 601 (KSEDMDSVES), and 689 to 699 (AAKDDLKKRQE). A Nuclear localization signal motif is present at residues 587 to 605 (RRKRSKSEDMDSVESKRRR). A Glycyl lysine isopeptide (Lys-Gly) (interchain with G-Cter in SUMO2) cross-link involves residue Lys592. Ser593 carries the post-translational modification Phosphoserine. The segment at 596-851 (MDSVESKRRR…NQPSGNVEFI (256 aa)) is interaction with SETDB1. Positions 666–696 (NKRHKAVLTELQAKIARLTKRFGAAKDDLKK) form a coiled coil. 2 positions are modified to phosphoserine: Ser700 and Ser707. Residues 713–722 (NDTNSNNNMT) are compositionally biased toward polar residues. A compositionally biased stretch (pro residues) spans 871-884 (PLPNPTKPNIPSVP). Ser933 is subject to Phosphoserine. Residues Lys944 and Lys974 each participate in a glycyl lysine isopeptide (Lys-Gly) (interchain with G-Cter in SUMO2) cross-link. Over residues 948 to 981 (STFSPPSSAEQNSSATPRIVTENQTNKTVDSSIN) the composition is skewed to polar residues. Positions 987-1000 (STSQSGKASSSDSS) are enriched in low complexity. The tract at residues 1001 to 1011 (GVIDLTMDDEE) is interaction with SUMO. Residues 1022-1040 (SPPSSSTVSTSQPMSRPLQ) are compositionally biased toward low complexity. The 90-residue stretch at 1054-1143 (PTSGPSQATI…RVPQTTTYVV (90 aa)) folds into the Fibronectin type-III 1 domain. The span at 1170–1187 (PRPLHPAPLPEAPQPQRL) shows a compositional bias: pro residues. Residues 1190–1306 (EAASTSLPQK…TDVISSSQNS (117 aa)) form an interaction with MBD1 region. The Fibronectin type-III 2 domain occupies 1196-1302 (LPQKPHLKLA…DPQSTDVISS (107 aa)).

This sequence belongs to the MCAF family. As to quaternary structure, interacts with MBD1; the interaction is enhanced when MBD1 is sumoylated. Interacts with SETDB1; the interaction protects SETDB1 from proteasomal degradation and is required to stimulate histone methyltransferase activity and facilitate the conversion of dimethylated to trimethylated H3 'Lys-9'. Interacts with SUMO ubiquitin-like proteins (SUMO1, SUNO2 and SUMO3), with a preference for SUMO2 and SUMO3. Interacts with SP1, ATF7 and ZHX1. Interacts with the general transcription machinery, including ERCC2, ERCC3, GTF2E1, GTF2E2 and POLR2A. In terms of tissue distribution, ubiquitously expressed at all stages studied.

It localises to the nucleus. Its function is as follows. Recruiter that couples transcriptional factors to general transcription apparatus and thereby modulates transcription regulation and chromatin formation. Can both act as an activator or a repressor depending on the context. Required for HUSH-mediated heterochromatin formation and gene silencing. Mediates MBD1-dependent transcriptional repression, probably by recruiting complexes containing SETDB1. Stabilizes SETDB1, is required to stimulate histone methyltransferase activity of SETDB1 and facilitates the conversion of dimethylated to trimethylated H3 'Lys-9' (H3K9me3). The complex formed with MBD1 and SETDB1 represses transcription and couples DNA methylation and histone H3 'Lys-9' trimethylation (H3K9me3). Facilitates telomerase TERT and TERC gene expression by SP1 in cancer cells. The protein is Activating transcription factor 7-interacting protein 1 (Atf7ip) of Mus musculus (Mouse).